Here is a 158-residue protein sequence, read N- to C-terminus: Auxin-responsive protein IAA31 (158 aa).

Low complexity predominate over residues 1-40 (MEVSNSCSSFSSSSVDSTKPSPSESSVNLSLSLTFPSTSP). The disordered stretch occupies residues 1–49 (MEVSNSCSSFSSSSVDSTKPSPSESSVNLSLSLTFPSTSPQREARQDWP). The short motif at 29 to 33 (LSLSL) is the EAR-like (transcriptional repression) element. The 86-residue stretch at 72–157 (SLFVKVYMEG…RRLKITRPER (86 aa)) folds into the PB1 domain.

This sequence belongs to the Aux/IAA family. As to quaternary structure, homodimers and heterodimers.

Its subcellular location is the nucleus. Functionally, aux/IAA proteins are short-lived transcriptional factors that function as repressors of early auxin response genes at low auxin concentrations. Repression is thought to result from the interaction with auxin response factors (ARFs), proteins that bind to the auxin-responsive promoter element (AuxRE). Formation of heterodimers with ARF proteins may alter their ability to modulate early auxin response genes expression. In Arabidopsis thaliana (Mouse-ear cress), this protein is Auxin-responsive protein IAA31 (IAA31).